An 858-amino-acid chain; its full sequence is Zinc finger protein ZXDC (858 aa).

Disordered stretches follow at residues 1 to 127 (MDLP…APAG) and 151 to 174 (PGPATAGAAAPRRAPQASGPSTPG). 3 stretches are compositionally biased toward low complexity: residues 23-35 (PLRRAPAPLGASP), 84-97 (GGAAAEAAGSQEAE), and 151-171 (PGPATAGAAAPRRAPQASGPS). The residue at position 34 (Ser34) is a Phosphoserine. Residue Thr172 is modified to Phosphothreonine. 10 consecutive C2H2-type zinc fingers follow at residues 175–199 (YRCPEPQCALAFAKKHQLKVHLLTH), 208–232 (FKCPLEGCGWAFTTSYKLKRHLQSH), 238–262 (FGCPVGGCGKKFTTVYNLKAHMKGH), 268–290 (FKCEVCAERFPTHAKLSSHQRSH), 297–321 (YKCDFPGCEKTFITVSALFSHNRAH), 328–352 (FSCSFPGCSKQYDKACRLKIHLRSH), 358–382 (FICDSDSCGWTFTSMSKLLRHRRKH), 388–412 (FTCPVEGCGKSFTRAEHLKGHSITH), 418–442 (FECPVEGCCARFSARSSLYIHSKKH), and 451–476 (SRCPVSTCNRLFTSKHSMKAHMVRQH). The required for transcriptional activation stretch occupies residues 579-688 (DSPLVLGTAA…HGLPQSTLPS (110 aa)). Residue Lys660 forms a Glycyl lysine isopeptide (Lys-Gly) (interchain with G-Cter in SUMO) linkage. Disordered stretches follow at residues 660–696 (KVEPDSPSRPGAVGQQEGSHGLPQSTLPSPAEQHGAQ), 726–756 (KEKKQRGAGSNAGASQSTQRKIKEGKMSPPH), and 837–858 (GGPAGPEATQFPGSTINLQDLQ). Ser665 is subject to Phosphoserine. A compositionally biased stretch (polar residues) spans 675–687 (QEGSHGLPQSTLP). The interval 781–858 (PAAGVQCGAQ…GSTINLQDLQ (78 aa)) is interaction with CIITA. A compositionally biased stretch (polar residues) spans 847-858 (FPGSTINLQDLQ).

Belongs to the ZXD family. In terms of assembly, self-associates. Interacts with ZXDA and CIITA. In terms of processing, sumoylated at Lys-660 with SUMO1, SUMO2 and SUMO3; sumoylation enhances the activity of the transcriptional activation domain. In terms of tissue distribution, expressed at high levels in heart, kidney, liver and testis, at moderate levels in brain and stomach, and at low levels in lung, muscle, placenta, small intestine and spleen.

The protein localises to the nucleus. Its function is as follows. Cooperates with CIITA to promote transcription of MHC class I and MHC class II genes. This Homo sapiens (Human) protein is Zinc finger protein ZXDC (ZXDC).